Consider the following 369-residue polypeptide: Bi-functional coumaroyl CoA and feruloyl CoA ortho-hydroxylase Diox2 (369 aa).

The 104-residue stretch at 215-318 (GSRRVNLNYY…RISVPLFVNP (104 aa)) folds into the Fe2OG dioxygenase domain. Tyr224 serves as a coordination point for 2-oxoglutarate. Fe cation contacts are provided by His239, Asp241, and His299. Arg309 and Ser311 together coordinate 2-oxoglutarate.

The protein belongs to the iron/ascorbate-dependent oxidoreductase family. Requires L-ascorbate as cofactor. Fe(2+) is required as a cofactor.

The catalysed reaction is (E)-4-coumaroyl-CoA + 2-oxoglutarate + O2 = (E)-2,4-dihydroxycinnamoyl-CoA + succinate + CO2. It carries out the reaction (E)-feruloyl-CoA + 2-oxoglutarate + O2 = (E)-6-hydroxyferuloyl-CoA + succinate + CO2. It functions in the pathway phenylpropanoid metabolism. Functionally, 2-oxoglutarate (OG)- and Fe(II)-dependent dioxygenase (2OGD) involved in scopoletin and umbelliferone biosynthesis. Converts feruloyl CoA into 6'-hydroxyferuloyl CoA, and p-coumaroyl CoA into 2,4-dihydroxycinnamoyl-CoA. The chain is Bi-functional coumaroyl CoA and feruloyl CoA ortho-hydroxylase Diox2 from Ruta graveolens (Common rue).